The sequence spans 65 residues: Beta-defensin 106A (65 aa).

A signal peptide spans methionine 1–alanine 20. Intrachain disulfides connect cysteine 26–cysteine 53, cysteine 33–cysteine 47, and cysteine 37–cysteine 54.

The protein belongs to the beta-defensin family. Monomer. Interacts with CCR2 (via extracellular N-terminal region); this interaction may preferentially require specific tyrosine sulfation on CCR2.

It is found in the secreted. It localises to the membrane. In terms of biological role, has antibacterial activity. Acts as a ligand for C-C chemokine receptor CCR2. This Gorilla gorilla gorilla (Western lowland gorilla) protein is Beta-defensin 106A (DEFB106A).